A 410-amino-acid polypeptide reads, in one-letter code: Lysosome-associated membrane glycoprotein 2 (410 aa).

Positions 1 to 28 are cleaved as a signal peptide; it reads MMCFRLSPVSGSGLVLSCLLLGAVQSYA. Residues 29–192 form a first lumenal domain region; sequence FELNLPDSKA…SKEEFVCEED (164 aa). Over 29–375 the chain is Lumenal; the sequence is FELNLPDSKA…QDCSADEDNF (347 aa). Cysteines 40 and 79 form a disulfide. N-linked (GlcNAc...) asparagine glycosylation is found at Asn-48, Asn-58, Asn-71, Asn-75, Asn-99, Asn-119, Asn-123, Asn-179, Asn-222, Asn-229, Asn-242, Asn-260, Asn-275, Asn-300, Asn-307, Asn-317, and Asn-356. Residues Cys-153 and Cys-189 are joined by a disulfide bond. A hinge region spans residues 193-228; the sequence is KSVTTVRPIIHTTVPPPTTTPTPLPPKVGNYSVSNG. The interval 229 to 375 is second lumenal domain; the sequence is NATCLLATMG…QDCSADEDNF (147 aa). Cys-232 and Cys-265 are oxidised to a cystine. The cysteines at positions 331 and 368 are disulfide-linked. Residues 376 to 399 form a helical membrane-spanning segment; it reads LVPIAVGAALAGVLALVLLAYFIG. The Cytoplasmic portion of the chain corresponds to 400–410; it reads LKRHHTGYEQF. An important for binding and subsequent lysosomal degradation of target proteins region spans residues 401-404; the sequence is KRHH.

Belongs to the LAMP family. Monomer. Forms large homooligomers. Interacts (via its cytoplasmic region) with HSPA8; HSPA8 mediates recruitment of proteins with a KFERQ motif to the surface of the lysosome for chaperone-mediated autophagy. Interacts with HSP90 in the lysosome lumen; this enhances LAMP2 stability. Interacts with MLLT11. Interacts with ABCB9. Interacts with FURIN. Interacts with CT55; this interaction may be important for LAMP2 protein stability. Interacts with TMEM175; inhibiting the proton channel activity of TMEM175. Forms a ternary complex with RAB7A and RUFY4 (via RUN domain); the interaction with RAB7A is mediated by RUFY4 (via RUN and coiled coil domains). Post-translationally, extensively N-glycosylated. Contains a minor proportion of O-linked glycans.

Its subcellular location is the lysosome membrane. The protein resides in the endosome membrane. It is found in the cell membrane. The protein localises to the cytoplasmic vesicle. It localises to the autophagosome membrane. Its function is as follows. Lysosomal membrane glycoprotein which plays an important role in lysosome biogenesis, lysosomal pH regulation and autophagy. Acts as an important regulator of lysosomal lumen pH regulation by acting as a direct inhibitor of the proton channel TMEM175, facilitating lysosomal acidification for optimal hydrolase activity. Plays an important role in chaperone-mediated autophagy, a process that mediates lysosomal degradation of proteins in response to various stresses and as part of the normal turnover of proteins with a long biological half-live. Functions by binding target proteins, such as GAPDH, NLRP3 and MLLT11, and targeting them for lysosomal degradation. In the chaperone-mediated autophagy, acts downstream of chaperones, such as HSPA8/HSC70, which recognize and bind substrate proteins and mediate their recruitment to lysosomes, where target proteins bind LAMP2. Plays a role in lysosomal protein degradation in response to starvation. Required for the fusion of autophagosomes with lysosomes during autophagy. Cells that lack LAMP2 express normal levels of VAMP8, but fail to accumulate STX17 on autophagosomes, which is the most likely explanation for the lack of fusion between autophagosomes and lysosomes. Required for normal degradation of the contents of autophagosomes. Required for efficient MHC class II-mediated presentation of exogenous antigens via its function in lysosomal protein degradation; antigenic peptides generated by proteases in the endosomal/lysosomal compartment are captured by nascent MHC II subunits. Is not required for efficient MHC class II-mediated presentation of endogenous antigens. This Cricetulus griseus (Chinese hamster) protein is Lysosome-associated membrane glycoprotein 2 (LAMP2).